The chain runs to 502 residues: Probable cytosol aminopeptidase (502 aa).

Residues Lys-267 and Asp-272 each contribute to the Mn(2+) site. The active site involves Lys-279. Positions 290, 349, and 351 each coordinate Mn(2+). Arg-353 is an active-site residue.

It belongs to the peptidase M17 family. The cofactor is Mn(2+).

The protein resides in the cytoplasm. The catalysed reaction is Release of an N-terminal amino acid, Xaa-|-Yaa-, in which Xaa is preferably Leu, but may be other amino acids including Pro although not Arg or Lys, and Yaa may be Pro. Amino acid amides and methyl esters are also readily hydrolyzed, but rates on arylamides are exceedingly low.. The enzyme catalyses Release of an N-terminal amino acid, preferentially leucine, but not glutamic or aspartic acids.. Functionally, presumably involved in the processing and regular turnover of intracellular proteins. Catalyzes the removal of unsubstituted N-terminal amino acids from various peptides. This is Probable cytosol aminopeptidase from Aeromonas hydrophila subsp. hydrophila (strain ATCC 7966 / DSM 30187 / BCRC 13018 / CCUG 14551 / JCM 1027 / KCTC 2358 / NCIMB 9240 / NCTC 8049).